The primary structure comprises 365 residues: Eukaryotic translation initiation factor 3 subunit H (365 aa).

Residues Ile15 to Ala166 enclose the MPN domain. The interval Lys276–Asp295 is disordered. The span at Arg277–Arg287 shows a compositional bias: basic and acidic residues.

This sequence belongs to the eIF-3 subunit H family. Component of the eukaryotic translation initiation factor 3 (eIF-3) complex.

It is found in the cytoplasm. In terms of biological role, component of the eukaryotic translation initiation factor 3 (eIF-3) complex, which is involved in protein synthesis of a specialized repertoire of mRNAs and, together with other initiation factors, stimulates binding of mRNA and methionyl-tRNAi to the 40S ribosome. The eIF-3 complex specifically targets and initiates translation of a subset of mRNAs involved in cell proliferation. The protein is Eukaryotic translation initiation factor 3 subunit H of Caenorhabditis briggsae.